Consider the following 172-residue polypeptide: 3-hydroxydecanoyl-[acyl-carrier-protein] dehydratase (172 aa).

Histidine 71 is an active-site residue.

Belongs to the thioester dehydratase family. FabA subfamily. In terms of assembly, homodimer.

It localises to the cytoplasm. It carries out the reaction a (3R)-hydroxyacyl-[ACP] = a (2E)-enoyl-[ACP] + H2O. It catalyses the reaction (3R)-hydroxydecanoyl-[ACP] = (2E)-decenoyl-[ACP] + H2O. The enzyme catalyses (2E)-decenoyl-[ACP] = (3Z)-decenoyl-[ACP]. Its pathway is lipid metabolism; fatty acid biosynthesis. In terms of biological role, necessary for the introduction of cis unsaturation into fatty acids. Catalyzes the dehydration of (3R)-3-hydroxydecanoyl-ACP to E-(2)-decenoyl-ACP and then its isomerization to Z-(3)-decenoyl-ACP. Can catalyze the dehydratase reaction for beta-hydroxyacyl-ACPs with saturated chain lengths up to 16:0, being most active on intermediate chain length. The chain is 3-hydroxydecanoyl-[acyl-carrier-protein] dehydratase from Blochmanniella pennsylvanica (strain BPEN).